Here is a 110-residue protein sequence, read N- to C-terminus: Ribonuclease P protein component 4 (110 aa).

4 residues coordinate Zn(2+): C65, C68, C94, and C97.

Belongs to the eukaryotic/archaeal RNase P protein component 4 family. In terms of assembly, consists of a catalytic RNA component and at least 4-5 protein subunits. Requires Zn(2+) as cofactor.

Its subcellular location is the cytoplasm. The enzyme catalyses Endonucleolytic cleavage of RNA, removing 5'-extranucleotides from tRNA precursor.. In terms of biological role, part of ribonuclease P, a protein complex that generates mature tRNA molecules by cleaving their 5'-ends. The sequence is that of Ribonuclease P protein component 4 from Methanococcus maripaludis (strain C6 / ATCC BAA-1332).